The chain runs to 693 residues: Phosphoribosylformylglycinamidine synthase subunit PurL (693 aa).

The active site involves His-34. 2 residues coordinate ATP: Tyr-37 and Lys-76. Glu-78 lines the Mg(2+) pocket. Substrate is bound by residues 79–82 (SHNH) and Arg-101. Residue His-80 is the Proton acceptor of the active site. Asp-102 serves as a coordination point for Mg(2+). Gln-222 lines the substrate pocket. Mg(2+) is bound at residue Asp-248. 292-294 (ETQ) contributes to the substrate binding site. ATP-binding residues include Asp-470 and Gly-507. Residue Ser-510 participates in substrate binding.

This sequence belongs to the FGAMS family. As to quaternary structure, monomer. Part of the FGAM synthase complex composed of 1 PurL, 1 PurQ and 2 PurS subunits.

It localises to the cytoplasm. It carries out the reaction N(2)-formyl-N(1)-(5-phospho-beta-D-ribosyl)glycinamide + L-glutamine + ATP + H2O = 2-formamido-N(1)-(5-O-phospho-beta-D-ribosyl)acetamidine + L-glutamate + ADP + phosphate + H(+). Its pathway is purine metabolism; IMP biosynthesis via de novo pathway; 5-amino-1-(5-phospho-D-ribosyl)imidazole from N(2)-formyl-N(1)-(5-phospho-D-ribosyl)glycinamide: step 1/2. Functionally, part of the phosphoribosylformylglycinamidine synthase complex involved in the purines biosynthetic pathway. Catalyzes the ATP-dependent conversion of formylglycinamide ribonucleotide (FGAR) and glutamine to yield formylglycinamidine ribonucleotide (FGAM) and glutamate. The FGAM synthase complex is composed of three subunits. PurQ produces an ammonia molecule by converting glutamine to glutamate. PurL transfers the ammonia molecule to FGAR to form FGAM in an ATP-dependent manner. PurS interacts with PurQ and PurL and is thought to assist in the transfer of the ammonia molecule from PurQ to PurL. The sequence is that of Phosphoribosylformylglycinamidine synthase subunit PurL from Pyrobaculum islandicum (strain DSM 4184 / JCM 9189 / GEO3).